The sequence spans 264 residues: Small ribosomal subunit protein eS1A (264 aa).

The tract at residues 233–264 (GEGGGTGKPAGDETGAKVERADGYEPPVQESV) is disordered. Residues 242–255 (AGDETGAKVERADG) show a composition bias toward basic and acidic residues.

This sequence belongs to the eukaryotic ribosomal protein eS1 family. Component of the small ribosomal subunit. Mature ribosomes consist of a small (40S) and a large (60S) subunit. The 40S subunit contains about 33 different proteins and 1 molecule of RNA (18S). The 60S subunit contains about 49 different proteins and 3 molecules of RNA (28S, 5.8S and 5S). Part of the small subunit (SSU) processome, composed of more than 70 proteins and the RNA chaperone small nucleolar RNA (snoRNA) U3.

The protein localises to the cytoplasm. It is found in the nucleus. Its subcellular location is the nucleolus. Component of the small ribosomal subunit. The ribosome is a large ribonucleoprotein complex responsible for the synthesis of proteins in the cell. Part of the small subunit (SSU) processome, first precursor of the small eukaryotic ribosomal subunit. During the assembly of the SSU processome in the nucleolus, many ribosome biogenesis factors, an RNA chaperone and ribosomal proteins associate with the nascent pre-rRNA and work in concert to generate RNA folding, modifications, rearrangements and cleavage as well as targeted degradation of pre-ribosomal RNA by the RNA exosome. May play a role during erythropoiesis. The polypeptide is Small ribosomal subunit protein eS1A (rps3a-a) (Xenopus laevis (African clawed frog)).